Here is a 282-residue protein sequence, read N- to C-terminus: MAAQVLSGHEAAEAVYEEIRARLRSLSFTPSLRVIRLGEDPASVAYVRLKDKRARALGYRSQVEVYPEDLPEEALLERIAALNADEEVDGILVQLPLPPHIRTQRVLEAIHPLKDVDGFHPLNVGRLWSGGKGLFPCTPLGVVRLLKHYGVDLRGKEVVVVGRSNIVGKPLAGLLLREDATVTLAHSKTQDLPEVTRRAQVLVVAVGRPHLVRKEWVREGAIVVDVGVNRVEGRLLGDVHPEVAEVAFALTPVPGGVGPMTVAMLMGNTLEAALLRRHGASG.

Residues 162–164 (GRS), S187, and V228 contribute to the NADP(+) site.

It belongs to the tetrahydrofolate dehydrogenase/cyclohydrolase family. Homodimer.

It catalyses the reaction (6R)-5,10-methylene-5,6,7,8-tetrahydrofolate + NADP(+) = (6R)-5,10-methenyltetrahydrofolate + NADPH. The catalysed reaction is (6R)-5,10-methenyltetrahydrofolate + H2O = (6R)-10-formyltetrahydrofolate + H(+). Its pathway is one-carbon metabolism; tetrahydrofolate interconversion. Functionally, catalyzes the oxidation of 5,10-methylenetetrahydrofolate to 5,10-methenyltetrahydrofolate and then the hydrolysis of 5,10-methenyltetrahydrofolate to 10-formyltetrahydrofolate. The chain is Bifunctional protein FolD from Thermus thermophilus (strain ATCC 27634 / DSM 579 / HB8).